The primary structure comprises 375 residues: D-apiose dehydrogenase (375 aa).

29-30 is an NAD(+) binding site; that stretch reads FF. The Mg(2+) site is built by Trp-38, Arg-39, Ile-41, and Ala-44. Residues Asp-51, Ser-93, 111–112, Asn-140, and 179–181 each bind NAD(+); these read QK and QPY. Lys-112 is a substrate binding site. The substrate site is built by Gln-179, Asp-192, His-196, and Tyr-246.

Belongs to the Gfo/Idh/MocA family.

It catalyses the reaction D-apiofuranose + NAD(+) = D-apionolactone + NADH + H(+). The protein operates within carbohydrate metabolism. Its function is as follows. Involved in catabolism of D-apiose. Catalyzes oxidation of D-apiose to D-apionolactone. In Paraburkholderia graminis (strain ATCC 700544 / DSM 17151 / LMG 18924 / NCIMB 13744 / C4D1M), this protein is D-apiose dehydrogenase.